Consider the following 158-residue polypeptide: Crossover junction endodeoxyribonuclease RuvC (158 aa).

Active-site residues include aspartate 7, glutamate 66, and aspartate 139. Aspartate 7, glutamate 66, and aspartate 139 together coordinate Mg(2+).

It belongs to the RuvC family. As to quaternary structure, homodimer which binds Holliday junction (HJ) DNA. The HJ becomes 2-fold symmetrical on binding to RuvC with unstacked arms; it has a different conformation from HJ DNA in complex with RuvA. In the full resolvosome a probable DNA-RuvA(4)-RuvB(12)-RuvC(2) complex forms which resolves the HJ. Requires Mg(2+) as cofactor.

The protein resides in the cytoplasm. It carries out the reaction Endonucleolytic cleavage at a junction such as a reciprocal single-stranded crossover between two homologous DNA duplexes (Holliday junction).. In terms of biological role, the RuvA-RuvB-RuvC complex processes Holliday junction (HJ) DNA during genetic recombination and DNA repair. Endonuclease that resolves HJ intermediates. Cleaves cruciform DNA by making single-stranded nicks across the HJ at symmetrical positions within the homologous arms, yielding a 5'-phosphate and a 3'-hydroxyl group; requires a central core of homology in the junction. The consensus cleavage sequence is 5'-(A/T)TT(C/G)-3'. Cleavage occurs on the 3'-side of the TT dinucleotide at the point of strand exchange. HJ branch migration catalyzed by RuvA-RuvB allows RuvC to scan DNA until it finds its consensus sequence, where it cleaves and resolves the cruciform DNA. The chain is Crossover junction endodeoxyribonuclease RuvC from Nitratiruptor sp. (strain SB155-2).